We begin with the raw amino-acid sequence, 464 residues long: Bifunctional protein GlmU (464 aa).

A pyrophosphorylase region spans residues 1-236 (MRAVILAAGL…PTEALGVNTR (236 aa)). Residues 6–9 (LAAG), lysine 20, and 77–78 (GT) each bind UDP-N-acetyl-alpha-D-glucosamine. A Mg(2+)-binding site is contributed by aspartate 102. The UDP-N-acetyl-alpha-D-glucosamine site is built by glycine 145, glutamate 161, asparagine 176, and asparagine 234. Asparagine 234 contributes to the Mg(2+) binding site. Positions 237 to 257 (WDLALVENVIKLKIARYWAER) are linker. Positions 258–464 (GVTVHYPETV…GRGKKKLQKD (207 aa)) are N-acetyltransferase. UDP-N-acetyl-alpha-D-glucosamine is bound by residues arginine 340 and lysine 358. Histidine 370 acts as the Proton acceptor in catalysis. UDP-N-acetyl-alpha-D-glucosamine-binding residues include tyrosine 373 and asparagine 384. Residues alanine 387, 393–394 (NY), serine 412, glycine 430, and arginine 447 contribute to the acetyl-CoA site.

This sequence in the N-terminal section; belongs to the N-acetylglucosamine-1-phosphate uridyltransferase family. It in the C-terminal section; belongs to the transferase hexapeptide repeat family. In terms of assembly, homotrimer. Mg(2+) serves as cofactor.

It localises to the cytoplasm. It carries out the reaction alpha-D-glucosamine 1-phosphate + acetyl-CoA = N-acetyl-alpha-D-glucosamine 1-phosphate + CoA + H(+). It catalyses the reaction N-acetyl-alpha-D-glucosamine 1-phosphate + UTP + H(+) = UDP-N-acetyl-alpha-D-glucosamine + diphosphate. Its pathway is nucleotide-sugar biosynthesis; UDP-N-acetyl-alpha-D-glucosamine biosynthesis; N-acetyl-alpha-D-glucosamine 1-phosphate from alpha-D-glucosamine 6-phosphate (route II): step 2/2. It functions in the pathway nucleotide-sugar biosynthesis; UDP-N-acetyl-alpha-D-glucosamine biosynthesis; UDP-N-acetyl-alpha-D-glucosamine from N-acetyl-alpha-D-glucosamine 1-phosphate: step 1/1. It participates in bacterial outer membrane biogenesis; LPS lipid A biosynthesis. Its function is as follows. Catalyzes the last two sequential reactions in the de novo biosynthetic pathway for UDP-N-acetylglucosamine (UDP-GlcNAc). The C-terminal domain catalyzes the transfer of acetyl group from acetyl coenzyme A to glucosamine-1-phosphate (GlcN-1-P) to produce N-acetylglucosamine-1-phosphate (GlcNAc-1-P), which is converted into UDP-GlcNAc by the transfer of uridine 5-monophosphate (from uridine 5-triphosphate), a reaction catalyzed by the N-terminal domain. The protein is Bifunctional protein GlmU of Aquifex aeolicus (strain VF5).